We begin with the raw amino-acid sequence, 116 residues long: Fluoride-specific ion channel FluC 1 (116 aa).

A run of 4 helical transmembrane segments spans residues 1 to 21 (MYAPLFVAIGGFFGAMARYLV), 32 to 52 (FPLGTLIVNLLGSFLLGWLAG), 54 to 74 (GAADAAKLLVGTGFMGAFTTF), and 93 to 113 (VVVYLAATYLCGVWLAWLGYH). Na(+) contacts are provided by G69 and T72.

Belongs to the fluoride channel Fluc/FEX (TC 1.A.43) family.

Its subcellular location is the cell membrane. It carries out the reaction fluoride(in) = fluoride(out). Na(+) is not transported, but it plays an essential structural role and its presence is essential for fluoride channel function. Its function is as follows. Fluoride-specific ion channel. Important for reducing fluoride concentration in the cell, thus reducing its toxicity. This is Fluoride-specific ion channel FluC 1 from Geobacillus kaustophilus (strain HTA426).